The primary structure comprises 383 residues: Probable L-aspartate decarboxylase (383 aa).

At Lys231 the chain carries N6-(pyridoxal phosphate)lysine.

The protein belongs to the group II decarboxylase family. MfnA subfamily. It depends on pyridoxal 5'-phosphate as a cofactor.

The enzyme catalyses L-aspartate + H(+) = beta-alanine + CO2. Its pathway is cofactor biosynthesis; coenzyme A biosynthesis. Functionally, catalyzes the decarboxylation of L-aspartate to produce beta-alanine. The sequence is that of Probable L-aspartate decarboxylase from Thermococcus gammatolerans (strain DSM 15229 / JCM 11827 / EJ3).